Consider the following 334-residue polypeptide: Short-chain dehydrogenase/reductase (334 aa).

The NADP(+) site is built by L44, K68, D93, N120, and K152. Active-site proton donor residues include S176 and Y205. NADP(+)-binding residues include Y205, K209, and N239. K209 serves as the catalytic Lowers pKa of active site Tyr.

Belongs to the short-chain dehydrogenases/reductases (SDR) family.

The protein operates within mycotoxin biosynthesis. Short-chain dehydrogenase/reductase; part of the 2 gene clusters that mediate the biosynthesis of fusicoccins, diterpene glucosides that display phytohormone-like activity and function as potent activators of plasma membrane H(+)-ATPases in plants by modifying 14-3-3 proteins and cause the plant disease constriction canker. The first step in the pathway is performed by the fusicoccadiene synthase PaFS that possesses both prenyl transferase and terpene cyclase activity, converting isopentenyl diphosphate and dimethylallyl diphosphate into geranylgeranyl diphosphate (GGDP) and successively converting GGDP into fusicocca-2,10(14)-diene, a precursor for fusicoccin H. The second step is the oxidation at the C-8 position by the cytochrome P450 monooxygenase PaP450-2 to yield fusicocca-2,10(14)-diene-8-beta-ol. The cytochrome P450 monooxygenase PaP450-1 then catalyzes the hydroxylation at the C-16 position to produce fusicocca-2,10(14)-diene-8-beta,16-diol. The dioxygenase fc-dox then catalyzes the 16-oxydation of fusicocca-2,10(14)-diene-8-beta,16-diol to yield an aldehyde (8-beta-hydroxyfusicocca-1,10(14)-dien-16-al). The short-chain dehydrogenase/reductase fc-sdr catalyzes the reduction of the aldehyde to yield fusicocca-1,10(14)-diene-8-beta,16-diol. The next step is the hydroxylation at C-9 performed by the cytochrome P450 monooxygenase PaP450-3 that leads to fusicoccin H aglycon which is glycosylated to fusicoccin H by the O-glycosyltransferase PaGT. Hydroxylation at C-12 by the cytochrome P450 monooxygenase PaP450-4 leads then to the production of fusicoccin Q and is followed by methylation by the O-methyltransferase PaMT to yield fusicoccin P. Fusicoccin P is further converted to fusicoccin J via prenylation by the O-glucose prenyltransferase PaPT. Cytochrome P450 monooxygenase PaP450-5 then performs hydroxylation at C-19 to yield dideacetyl-fusicoccin A which is acetylated to 3'-O-deacetyl-fusicoccin A by the O-acetyltransferase PaAT-2. Finally, a another acetylation by the O-acetyltransferase PaAT-1 yields fusicoccin A. The chain is Short-chain dehydrogenase/reductase from Phomopsis amygdali (Fusicoccum amygdali).